A 601-amino-acid chain; its full sequence is Glutathione-regulated potassium-efflux system protein KefB (601 aa).

Transmembrane regions (helical) follow at residues 4–24 (ADLL…VPLA), 29–49 (IGAV…GLGF), 55–75 (EILH…GLEL), 87–107 (IFGV…GLLM), 111–131 (FLWQ…TAMA), 152–172 (VLLF…LLAG), 177–197 (HFDW…LIGG), 207–227 (FIAA…LVLS), 230–250 (LFMD…GVLL), 262–282 (AIDP…GMSL), 284–304 (LGVL…LVVI), 324–344 (MQFA…FSTA), and 356–376 (ALLL…MKGI). In terms of domain architecture, RCK N-terminal spans 400 to 519 (KPQVIVVGFG…AGVTQFSRET (120 aa)).

The protein belongs to the monovalent cation:proton antiporter 2 (CPA2) transporter (TC 2.A.37) family. KefB subfamily. In terms of assembly, interacts with the regulatory subunit KefG.

It localises to the cell inner membrane. Pore-forming subunit of a potassium efflux system that confers protection against electrophiles. Catalyzes K(+)/H(+) antiport. The polypeptide is Glutathione-regulated potassium-efflux system protein KefB (Salmonella paratyphi B (strain ATCC BAA-1250 / SPB7)).